A 429-amino-acid polypeptide reads, in one-letter code: UDP-N-acetylglucosamine 1-carboxyvinyltransferase (429 aa).

22-23 lines the phosphoenolpyruvate pocket; sequence KN. Arginine 102 is a UDP-N-acetyl-alpha-D-glucosamine binding site. Cysteine 126 serves as the catalytic Proton donor. 2-(S-cysteinyl)pyruvic acid O-phosphothioketal is present on cysteine 126. UDP-N-acetyl-alpha-D-glucosamine contacts are provided by residues 131–135, aspartate 316, and isoleucine 338; that span reads RPVDL.

Belongs to the EPSP synthase family. MurA subfamily.

It localises to the cytoplasm. The enzyme catalyses phosphoenolpyruvate + UDP-N-acetyl-alpha-D-glucosamine = UDP-N-acetyl-3-O-(1-carboxyvinyl)-alpha-D-glucosamine + phosphate. The protein operates within cell wall biogenesis; peptidoglycan biosynthesis. Functionally, cell wall formation. Adds enolpyruvyl to UDP-N-acetylglucosamine. The protein is UDP-N-acetylglucosamine 1-carboxyvinyltransferase of Methylobacterium sp. (strain 4-46).